Here is a 198-residue protein sequence, read N- to C-terminus: Ion-translocating oxidoreductase complex subunit B (198 aa).

The segment at 1 to 26 (MTTIMIAVLAIALLATLFGAILGFAS) is hydrophobic. A 4Fe-4S domain is found at 32–90 (EADPIVDQIDAILPQTQCGQCGYPGCRPYAEAIANGDSINKCPPGGQATIEKLADLMGV). [4Fe-4S] cluster contacts are provided by Cys49, Cys52, Cys57, Cys73, Cys114, Cys117, Cys120, Cys124, Cys144, Cys147, Cys150, and Cys154. 2 4Fe-4S ferredoxin-type domains span residues 105 to 134 (KVAFIHEDMCIGCTKCIQACPVDAIVGGTK) and 135 to 164 (ALHTVIKDECTGCDLCVAPCPTDCIEMIPL).

Belongs to the 4Fe4S bacterial-type ferredoxin family. RnfB subfamily. As to quaternary structure, the complex is composed of six subunits: RnfA, RnfB, RnfC, RnfD, RnfE and RnfG. The cofactor is [4Fe-4S] cluster.

It is found in the cell inner membrane. Its function is as follows. Part of a membrane-bound complex that couples electron transfer with translocation of ions across the membrane. The sequence is that of Ion-translocating oxidoreductase complex subunit B from Vibrio vulnificus (strain CMCP6).